We begin with the raw amino-acid sequence, 261 residues long: Phosphatidylglycerol--prolipoprotein diacylglyceryl transferase (261 aa).

Transmembrane regions (helical) follow at residues 19–39 (VHWY…LALY), 56–76 (LIFY…MLFY), 92–112 (WRGG…TWIF), 126–146 (FVVP…FING), 173–193 (QLYE…WFSA), 199–219 (FAVS…AEFF), and 227–247 (GFVA…MIII). R139 is an a 1,2-diacyl-sn-glycero-3-phospho-(1'-sn-glycerol) binding site.

Belongs to the Lgt family.

It is found in the cell inner membrane. It carries out the reaction L-cysteinyl-[prolipoprotein] + a 1,2-diacyl-sn-glycero-3-phospho-(1'-sn-glycerol) = an S-1,2-diacyl-sn-glyceryl-L-cysteinyl-[prolipoprotein] + sn-glycerol 1-phosphate + H(+). Its pathway is protein modification; lipoprotein biosynthesis (diacylglyceryl transfer). In terms of biological role, catalyzes the transfer of the diacylglyceryl group from phosphatidylglycerol to the sulfhydryl group of the N-terminal cysteine of a prolipoprotein, the first step in the formation of mature lipoproteins. The polypeptide is Phosphatidylglycerol--prolipoprotein diacylglyceryl transferase (Coxiella burnetii (strain CbuK_Q154) (Coxiella burnetii (strain Q154))).